Reading from the N-terminus, the 94-residue chain is Small ribosomal subunit protein uS19 (94 aa).

Belongs to the universal ribosomal protein uS19 family.

Protein S19 forms a complex with S13 that binds strongly to the 16S ribosomal RNA. The protein is Small ribosomal subunit protein uS19 of Buchnera aphidicola subsp. Cinara cedri (strain Cc).